The following is a 354-amino-acid chain: Biotin synthase (354 aa).

Residues 41 to 265 form the Radical SAM core domain; the sequence is NEVQISRLLS…LMPHSRVRLS (225 aa). Residues C56, C60, and C63 each coordinate [4Fe-4S] cluster. [2Fe-2S] cluster contacts are provided by C100, C131, C191, and R263.

It belongs to the radical SAM superfamily. Biotin synthase family. Homodimer. Requires [4Fe-4S] cluster as cofactor. It depends on [2Fe-2S] cluster as a cofactor.

It catalyses the reaction (4R,5S)-dethiobiotin + (sulfur carrier)-SH + 2 reduced [2Fe-2S]-[ferredoxin] + 2 S-adenosyl-L-methionine = (sulfur carrier)-H + biotin + 2 5'-deoxyadenosine + 2 L-methionine + 2 oxidized [2Fe-2S]-[ferredoxin]. It functions in the pathway cofactor biosynthesis; biotin biosynthesis; biotin from 7,8-diaminononanoate: step 2/2. Its function is as follows. Catalyzes the conversion of dethiobiotin (DTB) to biotin by the insertion of a sulfur atom into dethiobiotin via a radical-based mechanism. This is Biotin synthase from Shewanella woodyi (strain ATCC 51908 / MS32).